Consider the following 85-residue polypeptide: Homeobox protein knotted-1-like 5 (85 aa).

The 21-residue stretch at 1 to 21 (ELKEMLLKKYSGCLSRLRSEF) folds into the ELK domain. A DNA-binding region (homeobox; TALE-type) is located at residues 22–85 (LKKRKKGKLP…NQRKRHWKPS (64 aa)).

It belongs to the TALE/KNOX homeobox family. As to expression, strongly expressed in ear inflorescence primordia and shoot meristem. Weakly expressed in embryos. Absent from leaves.

The protein localises to the nucleus. Functionally, probably binds to the DNA sequence 5'-TGAC-3'. The protein is Homeobox protein knotted-1-like 5 (KNOX5) of Zea mays (Maize).